Reading from the N-terminus, the 133-residue chain is Putative dispanin subfamily A member 2d (133 aa).

The Extracellular segment spans residues 1-57; the sequence is MNHTVQTFFSPVNSGQPPNYEMLKEEHKVAVLGVPHNPAPPTSTVIHIRSKTSVPHH. Lys24 participates in a covalent cross-link: Glycyl lysine isopeptide (Lys-Gly) (interchain with G-Cter in ubiquitin). A helical transmembrane segment spans residues 58 to 78; it reads VVWSLFNTLFMNPCCLGFIAF. Residues 79-107 are Cytoplasmic-facing; sequence AYSVKSRDRKMVGNVTGAQAYASTTKCLN. Residues Lys83, Lys88, and Lys104 each participate in a glycyl lysine isopeptide (Lys-Gly) (interchain with G-Cter in ubiquitin) cross-link. A helical membrane pass occupies residues 108 to 128; the sequence is IWALILGILMTILLIIIPVLI. Over 129–133 the chain is Extracellular; sequence FQAHR.

Belongs to the CD225/Dispanin family.

The protein resides in the membrane. The polypeptide is Putative dispanin subfamily A member 2d (Homo sapiens (Human)).